We begin with the raw amino-acid sequence, 254 residues long: UPF0173 protein YddR (254 aa).

The protein belongs to the UPF0173 family.

In Bacillus subtilis (strain 168), this protein is UPF0173 protein YddR (yddR).